The chain runs to 152 residues: Proteolipid protein 2 (152 aa).

Residues 19–137 (FSRTRKGILL…DAYFTFPLRQ (119 aa)) enclose the MARVEL domain. 3 consecutive transmembrane segments (helical) span residues 25–45 (GILLLAEIILCLVILICFSAG), 48–68 (GYSSLSVVEMVLAIVFFVIYM), and 85–105 (FFRTLIAAILYLITSIFVLVE). N108 carries an N-linked (GlcNAc...) asparagine glycan. Residues 112-132 (IAAGVLGLLATCLFGYDAYFT) form a helical membrane-spanning segment.

It localises to the membrane. Its function is as follows. May play a role in cell differentiation in the intestinal epithelium. This Oryctolagus cuniculus (Rabbit) protein is Proteolipid protein 2 (PLP2).